The primary structure comprises 276 residues: Large ribosomal subunit protein uL2 (276 aa).

2 disordered regions span residues 34–55 (LQPL…RHQG) and 221–276 (RGSV…RRTK). A compositionally biased stretch (polar residues) spans 37–48 (LKNNAGRNNNGR).

It belongs to the universal ribosomal protein uL2 family. As to quaternary structure, part of the 50S ribosomal subunit. Forms a bridge to the 30S subunit in the 70S ribosome.

Its function is as follows. One of the primary rRNA binding proteins. Required for association of the 30S and 50S subunits to form the 70S ribosome, for tRNA binding and peptide bond formation. It has been suggested to have peptidyltransferase activity; this is somewhat controversial. Makes several contacts with the 16S rRNA in the 70S ribosome. This chain is Large ribosomal subunit protein uL2, found in Enterococcus faecalis (strain ATCC 700802 / V583).